The following is a 561-amino-acid chain: MNINVADLLNGNYILLLFVVLALGLCLGKLRLGSVQLGNSIGVLVVSLLLGQQHFAINTDALNLGFMLFIFCVGVEAGPNFFSIFFRDGKNYLMLALVMVGSAMLIAMVLGKVFGWDIGLTAGMLAGAMTSTPVLVGAGDTLRHFGLPSDQLAQSLDHLSLGYALTYLVGLVSLIVGARYMPKLQHQDLQTSAQQIARERGLDTDSKRKVYLPVIRAYRVGPELVAWADGKNLRELGIYRQTGCYIERIRRNGILANPDGDAVLQMGDDIALVGYPDAHARLDPSFRNGKEVFDRDLLDMRIVTEEIVVKNHNAVGRRLAQLKLTDHGCFLNRVIRSQIEMPIDDNVVLNKGDVLQVSGDARRVKTVADRIGFISIHSQVTDLLAFCAFFIVGLMIGMITFQFSSFSFGIGNAAGLLFAGIMLGFLRANHPTFGYIPQGALNMVKEFGLMVFMAGVGLSAGAGINNGLGAVGGQMLAAGLIVSLVPVVICFLFGAYVLRMNRAMLFGAMMGARTCAPAMEIISDTARSNIPALGYAGTYAIANVLLTLAGTLIVIIWPGLQ.

5 consecutive transmembrane segments (helical) span residues 8–28 (LLNG…LCLG), 37–57 (LGNS…HFAI), 66–86 (FMLF…SIFF), 94–114 (MLAL…GKVF), and 158–178 (HLSL…IVGA). RCK C-terminal domains follow at residues 202–288 (LDTD…SFRN) and 292–373 (VFDR…RIGF). 5 helical membrane-spanning segments follow: residues 383-403 (LLAF…TFQF), 406-426 (FSFG…LGFL), 447-467 (FGLM…INNG), 478-498 (AGLI…AYVL), and 540-560 (AIAN…WPGL).

This sequence belongs to the AAE transporter (TC 2.A.81) family. YbjL subfamily.

The protein resides in the cell membrane. This is Putative transport protein KPN78578_08530 from Klebsiella pneumoniae subsp. pneumoniae (strain ATCC 700721 / MGH 78578).